A 251-amino-acid chain; its full sequence is Ubiquinone/menaquinone biosynthesis C-methyltransferase UbiE (251 aa).

Residues T74, D95, and 123–124 each bind S-adenosyl-L-methionine; that span reads NA.

Belongs to the class I-like SAM-binding methyltransferase superfamily. MenG/UbiE family.

It carries out the reaction a 2-demethylmenaquinol + S-adenosyl-L-methionine = a menaquinol + S-adenosyl-L-homocysteine + H(+). The enzyme catalyses a 2-methoxy-6-(all-trans-polyprenyl)benzene-1,4-diol + S-adenosyl-L-methionine = a 5-methoxy-2-methyl-3-(all-trans-polyprenyl)benzene-1,4-diol + S-adenosyl-L-homocysteine + H(+). Its pathway is quinol/quinone metabolism; menaquinone biosynthesis; menaquinol from 1,4-dihydroxy-2-naphthoate: step 2/2. The protein operates within cofactor biosynthesis; ubiquinone biosynthesis. Its function is as follows. Methyltransferase required for the conversion of demethylmenaquinol (DMKH2) to menaquinol (MKH2) and the conversion of 2-polyprenyl-6-methoxy-1,4-benzoquinol (DDMQH2) to 2-polyprenyl-3-methyl-6-methoxy-1,4-benzoquinol (DMQH2). The chain is Ubiquinone/menaquinone biosynthesis C-methyltransferase UbiE from Shewanella piezotolerans (strain WP3 / JCM 13877).